Here is a 663-residue protein sequence, read N- to C-terminus: UvrABC system protein B (663 aa).

Positions 1 to 10 (MIDKRDDKPF) are enriched in basic and acidic residues. The interval 1–23 (MIDKRDDKPFKLKSKYKPSGDQP) is disordered. Residues 31-418 (DNIEGGEKAQ…TNTIIEQIIR (388 aa)) enclose the Helicase ATP-binding domain. Residue 44 to 51 (GATGTGKT) participates in ATP binding. The Beta-hairpin motif lies at 97 to 120 (YYDYYQPEAYVPSSDTYIEKDSSV). One can recognise a Helicase C-terminal domain in the interval 435–597 (QMDDLLGEIN…IVPQTIKKDI (163 aa)). The UVR domain maps to 627–662 (KEAINALQKQMQEAAELLDFELAAQMRDLILELKLM).

This sequence belongs to the UvrB family. As to quaternary structure, forms a heterotetramer with UvrA during the search for lesions. Interacts with UvrC in an incision complex.

Its subcellular location is the cytoplasm. Its function is as follows. The UvrABC repair system catalyzes the recognition and processing of DNA lesions. A damage recognition complex composed of 2 UvrA and 2 UvrB subunits scans DNA for abnormalities. Upon binding of the UvrA(2)B(2) complex to a putative damaged site, the DNA wraps around one UvrB monomer. DNA wrap is dependent on ATP binding by UvrB and probably causes local melting of the DNA helix, facilitating insertion of UvrB beta-hairpin between the DNA strands. Then UvrB probes one DNA strand for the presence of a lesion. If a lesion is found the UvrA subunits dissociate and the UvrB-DNA preincision complex is formed. This complex is subsequently bound by UvrC and the second UvrB is released. If no lesion is found, the DNA wraps around the other UvrB subunit that will check the other stand for damage. This is UvrABC system protein B from Streptococcus pyogenes serotype M18 (strain MGAS8232).